A 73-amino-acid chain; its full sequence is ComX pheromone (73 aa).

Positions 1–52 (MKHIDKIISHLVNNPEAFDQFKNGNLTLLNINEKEKKAILYAFEQGEVPRTS) are excised as a propeptide. Residue Trp-54 is the site of 3'-farnesyl-2',N2-cyclotryptophan attachment. Positions 59–73 (AISNFFEDDKRKSLI) are excised as a propeptide.

As to quaternary structure, interacts directly with the sensor histidine kinase ComP and stimulates its activity. Trp-54 is modified by farnesylation, which is essential for activity. Modified by the tryptophan prenyltransferase ComQ before export to the extracellular environment.

Its subcellular location is the secreted. Its function is as follows. Part of a major quorum-sensing system that regulates the development of genetic competence. Acts through the activation of the two-component regulatory system ComP/ComA composed of a sensor histidine kinase, ComP, and a response regulator, ComA. Activates the expression of the genes for biosynthesis of poly-gamma-glutamic acid (gamma-PGA), which is involved in biofilm formation in B.subtilis natto. The protein is ComX pheromone of Bacillus subtilis subsp. natto (strain BEST195).